The primary structure comprises 387 residues: Phosphoglycerate kinase (387 aa).

Substrate is bound by residues 21–23, Arg36, 59–62, Arg113, and Arg146; these read DLN and HLGR. ATP-binding positions include Lys197, Glu314, and 340-343; that span reads GGDT.

Belongs to the phosphoglycerate kinase family. In terms of assembly, monomer.

The protein localises to the cytoplasm. It catalyses the reaction (2R)-3-phosphoglycerate + ATP = (2R)-3-phospho-glyceroyl phosphate + ADP. It functions in the pathway carbohydrate degradation; glycolysis; pyruvate from D-glyceraldehyde 3-phosphate: step 2/5. The chain is Phosphoglycerate kinase from Pseudomonas paraeruginosa (strain DSM 24068 / PA7) (Pseudomonas aeruginosa (strain PA7)).